The sequence spans 1153 residues: Probable RNA-dependent RNA polymerase 3 (1153 aa).

Belongs to the RdRP family. In terms of tissue distribution, expressed in shoot apical meristem (SAM) and panicles.

The catalysed reaction is RNA(n) + a ribonucleoside 5'-triphosphate = RNA(n+1) + diphosphate. Probably involved in the RNA silencing pathway and required for the generation of small interfering RNAs (siRNAs). The sequence is that of Probable RNA-dependent RNA polymerase 3 (RDR3) from Oryza sativa subsp. japonica (Rice).